A 70-amino-acid chain; its full sequence is MTTIVLNPNEPVEVALRRFRRSIERTGLIKELRARTSYEKPTTERKRKKAAAVARLRKQVRRSMPPKKKY.

Positions 37–70 are disordered; sequence SYEKPTTERKRKKAAAVARLRKQVRRSMPPKKKY. The segment covering 45 to 70 has biased composition (basic residues); that stretch reads RKRKKAAAVARLRKQVRRSMPPKKKY.

Belongs to the bacterial ribosomal protein bS21 family.

In Burkholderia pseudomallei (strain K96243), this protein is Small ribosomal subunit protein bS21B.